A 134-amino-acid chain; its full sequence is ATP synthase epsilon chain (134 aa).

The protein belongs to the ATPase epsilon chain family. As to quaternary structure, F-type ATPases have 2 components, CF(1) - the catalytic core - and CF(0) - the membrane proton channel. CF(1) has five subunits: alpha(3), beta(3), gamma(1), delta(1), epsilon(1). CF(0) has three main subunits: a, b and c.

The protein resides in the cell inner membrane. In terms of biological role, produces ATP from ADP in the presence of a proton gradient across the membrane. The protein is ATP synthase epsilon chain of Nitratidesulfovibrio vulgaris (strain ATCC 29579 / DSM 644 / CCUG 34227 / NCIMB 8303 / VKM B-1760 / Hildenborough) (Desulfovibrio vulgaris).